A 199-amino-acid polypeptide reads, in one-letter code: Imidazoleglycerol-phosphate dehydratase (199 aa).

This sequence belongs to the imidazoleglycerol-phosphate dehydratase family.

It is found in the cytoplasm. It catalyses the reaction D-erythro-1-(imidazol-4-yl)glycerol 3-phosphate = 3-(imidazol-4-yl)-2-oxopropyl phosphate + H2O. It functions in the pathway amino-acid biosynthesis; L-histidine biosynthesis; L-histidine from 5-phospho-alpha-D-ribose 1-diphosphate: step 6/9. This is Imidazoleglycerol-phosphate dehydratase from Bifidobacterium longum (strain NCC 2705).